A 727-amino-acid polypeptide reads, in one-letter code: Elongation factor 2 (727 aa).

A tr-type G domain is found at 19–260 (DQIRNIGICA…MVVTHLPNPV (242 aa)). GTP is bound by residues 28 to 35 (AHIDHGKT), 94 to 98 (DTPGH), and 148 to 151 (NKVD). His-603 is modified (diphthamide).

The protein belongs to the TRAFAC class translation factor GTPase superfamily. Classic translation factor GTPase family. EF-G/EF-2 subfamily.

It is found in the cytoplasm. Catalyzes the GTP-dependent ribosomal translocation step during translation elongation. During this step, the ribosome changes from the pre-translocational (PRE) to the post-translocational (POST) state as the newly formed A-site-bound peptidyl-tRNA and P-site-bound deacylated tRNA move to the P and E sites, respectively. Catalyzes the coordinated movement of the two tRNA molecules, the mRNA and conformational changes in the ribosome. The sequence is that of Elongation factor 2 from Methanococcus aeolicus (strain ATCC BAA-1280 / DSM 17508 / OCM 812 / Nankai-3).